A 236-amino-acid polypeptide reads, in one-letter code: Putative N-acetylmannosamine-6-phosphate 2-epimerase (236 aa).

The protein belongs to the NanE family.

It carries out the reaction an N-acyl-D-glucosamine 6-phosphate = an N-acyl-D-mannosamine 6-phosphate. Its pathway is amino-sugar metabolism; N-acetylneuraminate degradation; D-fructose 6-phosphate from N-acetylneuraminate: step 3/5. In terms of biological role, converts N-acetylmannosamine-6-phosphate (ManNAc-6-P) to N-acetylglucosamine-6-phosphate (GlcNAc-6-P). This Listeria welshimeri serovar 6b (strain ATCC 35897 / DSM 20650 / CCUG 15529 / CIP 8149 / NCTC 11857 / SLCC 5334 / V8) protein is Putative N-acetylmannosamine-6-phosphate 2-epimerase.